Reading from the N-terminus, the 144-residue chain is NADPH-dependent 7-cyano-7-deazaguanine reductase (144 aa).

Residues 1–21 (MSQSPIQNPTSDPNAQSVQET) are compositionally biased toward polar residues. A disordered region spans residues 1 to 27 (MSQSPIQNPTSDPNAQSVQETSESKYG). Cysteine 61 functions as the Thioimide intermediate in the catalytic mechanism. Aspartate 68 acts as the Proton donor in catalysis. Substrate is bound by residues 83–85 (VEL) and 102–103 (HE).

This sequence belongs to the GTP cyclohydrolase I family. QueF type 1 subfamily.

It is found in the cytoplasm. The catalysed reaction is 7-aminomethyl-7-carbaguanine + 2 NADP(+) = 7-cyano-7-deazaguanine + 2 NADPH + 3 H(+). It participates in tRNA modification; tRNA-queuosine biosynthesis. Its function is as follows. Catalyzes the NADPH-dependent reduction of 7-cyano-7-deazaguanine (preQ0) to 7-aminomethyl-7-deazaguanine (preQ1). This chain is NADPH-dependent 7-cyano-7-deazaguanine reductase, found in Acaryochloris marina (strain MBIC 11017).